We begin with the raw amino-acid sequence, 168 residues long: Large ribosomal subunit protein uL10 (168 aa).

The protein belongs to the universal ribosomal protein uL10 family. Part of the ribosomal stalk of the 50S ribosomal subunit. The N-terminus interacts with L11 and the large rRNA to form the base of the stalk. The C-terminus forms an elongated spine to which L12 dimers bind in a sequential fashion forming a multimeric L10(L12)X complex.

In terms of biological role, forms part of the ribosomal stalk, playing a central role in the interaction of the ribosome with GTP-bound translation factors. The polypeptide is Large ribosomal subunit protein uL10 (Photorhabdus laumondii subsp. laumondii (strain DSM 15139 / CIP 105565 / TT01) (Photorhabdus luminescens subsp. laumondii)).